The following is a 136-amino-acid chain: Large-conductance mechanosensitive channel (136 aa).

4 consecutive transmembrane segments (helical) span residues 9–29, 32–52, 54–74, and 79–99; these read AFAS…GAAF, IVSS…LGGV, FSDL…VVIA, and IQTV…LKAI.

It belongs to the MscL family. Homopentamer.

It localises to the cell inner membrane. Channel that opens in response to stretch forces in the membrane lipid bilayer. May participate in the regulation of osmotic pressure changes within the cell. The polypeptide is Large-conductance mechanosensitive channel (Vibrio cholerae serotype O1 (strain ATCC 39541 / Classical Ogawa 395 / O395)).